A 106-amino-acid polypeptide reads, in one-letter code: Large ribosomal subunit protein bL21 (106 aa).

Belongs to the bacterial ribosomal protein bL21 family. In terms of assembly, part of the 50S ribosomal subunit. Contacts protein L20.

Functionally, this protein binds to 23S rRNA in the presence of protein L20. This chain is Large ribosomal subunit protein bL21, found in Xanthomonas oryzae pv. oryzae (strain MAFF 311018).